The following is a 689-amino-acid chain: Glycine--tRNA ligase beta subunit (689 aa).

This sequence belongs to the class-II aminoacyl-tRNA synthetase family. Tetramer of two alpha and two beta subunits.

Its subcellular location is the cytoplasm. It catalyses the reaction tRNA(Gly) + glycine + ATP = glycyl-tRNA(Gly) + AMP + diphosphate. The polypeptide is Glycine--tRNA ligase beta subunit (Salmonella paratyphi C (strain RKS4594)).